The primary structure comprises 344 residues: MENEEIPEFLSPKEEIVYWRELAKRLKQSYQEARDELIEFQEGSRELEAELETQLIQAEQRNRDLLGDNQRLKCEVDSLKEKLEHQYAQSYKQVSLLEDELVRARSIKDQLHKYVRELEQANDDLERAKRATIVSLEDFEQRLNQAIERNAFLESELDEKESLLVSVQRLKDEARDLRQELAVRERQTDGIRKSAPSSPTLDCEKTDSSVQASLSLPATPVGKISENSFTSPKGIPNGFGTTPLTPSARISALNIVGDLLRKVGALESKLAACRNFAKDQASRKSYTPANLNSSSSSVLNSSGVKYSHAGHTSFFDKGAVNGYDPPGVLGSRPPSPPGLLPLSV.

A coiled-coil region spans residues 13-190 (KEEIVYWREL…LAVRERQTDG (178 aa)). 2 disordered regions span residues 186-209 (RQTD…TDSS) and 325-344 (PPGV…PLSV). The segment covering 333-344 (PPSPPGLLPLSV) has biased composition (pro residues).

Belongs to the nudE family. In terms of processing, phosphorylated in mitosis.

Its subcellular location is the cytoplasm. It is found in the cytoskeleton. The protein resides in the microtubule organizing center. The protein localises to the centrosome. It localises to the spindle. Its function is as follows. Required for organization of the cellular microtubule array and microtubule anchoring at the centrosome. Positively regulates the activity of the minus-end directed microtubule motor protein dynein. May enhance dynein-mediated microtubule sliding by targeting dynein to the microtubule plus end. Positively regulates lysosome peripheral distribution and ruffled border formation in osteoclasts. The polypeptide is Nuclear distribution protein nudE-like 1-B (ndel1-b) (Xenopus laevis (African clawed frog)).